The sequence spans 473 residues: Glutamate--tRNA ligase (473 aa).

The short motif at 11–21 (PSPTGFLHIGG) is the 'HIGH' region element. Positions 240-244 (KLSKR) match the 'KMSKS' region motif. Residue Lys-243 participates in ATP binding.

It belongs to the class-I aminoacyl-tRNA synthetase family. Glutamate--tRNA ligase type 1 subfamily. As to quaternary structure, monomer.

It localises to the cytoplasm. It carries out the reaction tRNA(Glu) + L-glutamate + ATP = L-glutamyl-tRNA(Glu) + AMP + diphosphate. In terms of biological role, catalyzes the attachment of glutamate to tRNA(Glu) in a two-step reaction: glutamate is first activated by ATP to form Glu-AMP and then transferred to the acceptor end of tRNA(Glu). The protein is Glutamate--tRNA ligase of Afipia carboxidovorans (strain ATCC 49405 / DSM 1227 / KCTC 32145 / OM5) (Oligotropha carboxidovorans).